The chain runs to 487 residues: Arginine ADP-riboxanase CopC (487 aa).

Residues 1 to 12 (MRVENHSPSLSK) show a composition bias toward polar residues. A disordered region spans residues 1–27 (MRVENHSPSLSKLNPPEAGSGDPTAIG). NAD(+)-binding residues include H137, Q138, S139, L143, A150, A152, N154, and L157. Residue H137 participates in nicotinamide binding. ADP-D-ribose is bound by residues S139 and L143. A152, N154, L157, G166, N167, T168, and F183 together coordinate ADP-D-ribose. N167 contributes to the NAD(+) binding site. F183 is a binding site for NAD(+). Nicotinamide contacts are provided by F183, F184, H202, and F207. NAD(+) is bound at residue H202. ADP-D-ribose-binding residues include F207 and D230. NAD(+) is bound by residues D230 and E325. Residue E325 participates in nicotinamide binding. The active site involves E325. ANK repeat units lie at residues 368 to 398 (DAVT…EAGD) and 444 to 476 (SGET…LLSE).

It belongs to the OspC family. Interacts with host calmodulin (CALM1, CALM2 and/or CALM3); specifically interacts with the apo form of calmodulin and calmodulin-binding is required to mediate arginine ADP-riboxanation of host caspases.

Its subcellular location is the secreted. It is found in the host cytoplasm. The catalysed reaction is L-arginyl-[protein] + NAD(+) = ADP-riboxanated L-argininyl-[protein] + nicotinamide + NH4(+) + H(+). With respect to regulation, interaction with host calmodulin (CALM1, CALM2 and/or CALM3) is required to mediate arginine ADP-riboxanation of host caspases. In terms of biological role, ADP-riboxanase effector that inhibits host cell programmed cell death. Acts by mediating arginine ADP-riboxanation of host caspases (CASP3, CASP7, CASP8 and CASP9), blocking their processing and activation. ADP-riboxanation of host apoptotic caspases (CASP3, CASP7, CASP8 and CASP9) prevents their activation, thereby inhibiting host cell apoptosis. ADP-riboxanation of host CASP8 also inhibits host cell necroptosis. ADP-riboxanation of host CASP3 also abolishes pyroptosis by preventing its ability to cleave GSDME. May also able to inactivate CASP4/CASP11, blocking inhibiting LPS-induced pyroptosis; however this activity is unsure in vivo. ADP-riboxanation takes place in several steps: CopC first binds host caspases and NAD(+); NAD(+) is hydrolyzed to nicotinamide and ADP-D-ribose. CopC then transfers the ADP-D-ribose to the modified arginine of caspases and forms the ADP-D-ribose-deacylization on arginine, leading to deamination to remove one N-omega group on target arginine. This chain is Arginine ADP-riboxanase CopC, found in Chromobacterium violaceum (strain ATCC 12472 / DSM 30191 / JCM 1249 / CCUG 213 / NBRC 12614 / NCIMB 9131 / NCTC 9757 / MK).